We begin with the raw amino-acid sequence, 728 residues long: 1,4-alpha-glucan branching enzyme GlgB (728 aa).

Aspartate 405 acts as the Nucleophile in catalysis. The active-site Proton donor is the glutamate 458.

This sequence belongs to the glycosyl hydrolase 13 family. GlgB subfamily. As to quaternary structure, monomer.

It carries out the reaction Transfers a segment of a (1-&gt;4)-alpha-D-glucan chain to a primary hydroxy group in a similar glucan chain.. It participates in glycan biosynthesis; glycogen biosynthesis. In terms of biological role, catalyzes the formation of the alpha-1,6-glucosidic linkages in glycogen by scission of a 1,4-alpha-linked oligosaccharide from growing alpha-1,4-glucan chains and the subsequent attachment of the oligosaccharide to the alpha-1,6 position. The polypeptide is 1,4-alpha-glucan branching enzyme GlgB (Salmonella arizonae (strain ATCC BAA-731 / CDC346-86 / RSK2980)).